The following is a 396-amino-acid chain: Lipid-A-disaccharide synthase (396 aa).

This sequence belongs to the LpxB family.

The catalysed reaction is a lipid X + a UDP-2-N,3-O-bis[(3R)-3-hydroxyacyl]-alpha-D-glucosamine = a lipid A disaccharide + UDP + H(+). It functions in the pathway bacterial outer membrane biogenesis; LPS lipid A biosynthesis. Its function is as follows. Condensation of UDP-2,3-diacylglucosamine and 2,3-diacylglucosamine-1-phosphate to form lipid A disaccharide, a precursor of lipid A, a phosphorylated glycolipid that anchors the lipopolysaccharide to the outer membrane of the cell. This Hahella chejuensis (strain KCTC 2396) protein is Lipid-A-disaccharide synthase.